Reading from the N-terminus, the 159-residue chain is Ethylene-responsive transcription factor ERF069 (159 aa).

Disordered regions lie at residues 1–36 (MKRI…KKLV) and 128–159 (DAPT…EEVV). Positions 74-134 (KFRGVRQRPW…IGPDAPTNFG (61 aa)) form a DNA-binding region, AP2/ERF. Positions 136–148 (PDVDSAVVKKQDS) are enriched in basic and acidic residues.

The protein belongs to the AP2/ERF transcription factor family. ERF subfamily.

It localises to the nucleus. In terms of biological role, probably acts as a transcriptional activator. Binds to the GCC-box pathogenesis-related promoter element. May be involved in the regulation of gene expression by stress factors and by components of stress signal transduction pathways. This chain is Ethylene-responsive transcription factor ERF069 (ERF069), found in Arabidopsis thaliana (Mouse-ear cress).